Here is a 643-residue protein sequence, read N- to C-terminus: E3 ubiquitin-protein ligase Praja-1 (643 aa).

Residues 1–363 (MGQESSKPVW…SDDYYKYCDE (363 aa)) are disordered. 3 stretches are compositionally biased toward basic and acidic residues: residues 95–105 (DYSRYPPREYR), 145–158 (KFKDDKLYDPEKGA), and 173–183 (RDVREERDKLD). Residues 200-209 (QSSVASQSSS) are compositionally biased toward low complexity. Basic and acidic residues predominate over residues 213-227 (LATKGDSSERERREQ). Ser265 carries the phosphoserine modification. A Phosphothreonine modification is found at Thr277. Composition is skewed to basic and acidic residues over residues 289–310 (RWRDTANDNEGHSDGLARRGRG) and 320–362 (KYPE…KYCD). Ser365 and Ser367 each carry phosphoserine. Residues 380 to 454 (RSREQTLSSS…REPSLQEEQA (75 aa)) form a disordered region. The segment covering 410–439 (SASTGTSPGPGASASAGAGAGASAGSNGSN) has biased composition (low complexity). The segment at 595–636 (CPICCSEYVKGEVATELPCHHYFHKPCVSIWLQKSGTCPVCR) adopts an RING-type zinc-finger fold.

In terms of assembly, binds ubiquitin-conjugating enzymes (E2s). In vitro, interacts with the ubiquitin-conjugating enzyme, UBE2D2. Post-translationally, substrate for E2-dependent ubiquitination. In terms of tissue distribution, expressed in various regions of the brain including the cerebellum, cerebral cortex, medulla, occipital pole, frontal lobe, temporal lobe and putamen. Highest levels in the cerebral cortex.

It carries out the reaction S-ubiquitinyl-[E2 ubiquitin-conjugating enzyme]-L-cysteine + [acceptor protein]-L-lysine = [E2 ubiquitin-conjugating enzyme]-L-cysteine + N(6)-ubiquitinyl-[acceptor protein]-L-lysine.. Its function is as follows. Has E2-dependent E3 ubiquitin-protein ligase activity. Ubiquitinates MAGED1 antigen leading to its subsequent degradation by proteasome. May be involved in protein sorting. The chain is E3 ubiquitin-protein ligase Praja-1 (PJA1) from Homo sapiens (Human).